The following is a 225-amino-acid chain: UPF0758 protein BCB4264_A4572 (225 aa).

Residues 103-225 (SIRSPEDCAK…FVSLKEKGHI (123 aa)) form the MPN domain. Zn(2+) is bound by residues His174, His176, and Asp187. Residues 174-187 (HNHPSGDPTPSRED) carry the JAMM motif motif.

This sequence belongs to the UPF0758 family.

This Bacillus cereus (strain B4264) protein is UPF0758 protein BCB4264_A4572.